Reading from the N-terminus, the 841-residue chain is uncharacterized protein (841 aa).

The first 31 residues, 1–31 (MKIERYFKAIARAFIITFLFSLILQDNGVLA), serve as a signal peptide directing secretion.

The protein localises to the secreted. This is an uncharacterized protein from Schizosaccharomyces pombe (strain 972 / ATCC 24843) (Fission yeast).